The following is a 264-amino-acid chain: Acetyl-coenzyme A carboxylase carboxyl transferase subunit beta (264 aa).

The CoA carboxyltransferase N-terminal domain occupies leucine 4–serine 264. Cysteine 8, cysteine 11, cysteine 27, and cysteine 29 together coordinate Zn(2+). A C4-type zinc finger spans residues cysteine 8–cysteine 29.

It belongs to the AccD/PCCB family. As to quaternary structure, acetyl-CoA carboxylase is a heterohexamer composed of biotin carboxyl carrier protein (AccB), biotin carboxylase (AccC) and two subunits each of ACCase subunit alpha (AccA) and ACCase subunit beta (AccD). Requires Zn(2+) as cofactor.

The protein localises to the cytoplasm. The catalysed reaction is N(6)-carboxybiotinyl-L-lysyl-[protein] + acetyl-CoA = N(6)-biotinyl-L-lysyl-[protein] + malonyl-CoA. It functions in the pathway lipid metabolism; malonyl-CoA biosynthesis; malonyl-CoA from acetyl-CoA: step 1/1. Component of the acetyl coenzyme A carboxylase (ACC) complex. Biotin carboxylase (BC) catalyzes the carboxylation of biotin on its carrier protein (BCCP) and then the CO(2) group is transferred by the transcarboxylase to acetyl-CoA to form malonyl-CoA. The chain is Acetyl-coenzyme A carboxylase carboxyl transferase subunit beta from Heliobacterium modesticaldum (strain ATCC 51547 / Ice1).